Consider the following 98-residue polypeptide: NADH-ubiquinone oxidoreductase chain 4L (98 aa).

The next 3 membrane-spanning stretches (helical) occupy residues 1–21, 28–48, and 59–79; these read MMPISLSLTMAFSLALAGTLI, STLLCLEGMMLSLFILMAMLI, and APLILLVFSACEAGIGLALLV.

It belongs to the complex I subunit 4L family. In terms of assembly, core subunit of respiratory chain NADH dehydrogenase (Complex I) which is composed of 45 different subunits.

It is found in the mitochondrion inner membrane. It carries out the reaction a ubiquinone + NADH + 5 H(+)(in) = a ubiquinol + NAD(+) + 4 H(+)(out). Core subunit of the mitochondrial membrane respiratory chain NADH dehydrogenase (Complex I) which catalyzes electron transfer from NADH through the respiratory chain, using ubiquinone as an electron acceptor. Part of the enzyme membrane arm which is embedded in the lipid bilayer and involved in proton translocation. This is NADH-ubiquinone oxidoreductase chain 4L (MT-ND4L) from Petaurus breviceps (Australian sugar glider).